The following is a 363-amino-acid chain: Fructose-bisphosphate aldolase, muscle type (363 aa).

R56 and K147 together coordinate substrate. K230 serves as the catalytic Schiff-base intermediate with dihydroxyacetone-P.

It belongs to the class I fructose-bisphosphate aldolase family. In terms of assembly, homotetramer. As to expression, expressed mainly in the skeletal muscle, heart muscle, brain, and some other tissues, but probably not in liver.

It carries out the reaction beta-D-fructose 1,6-bisphosphate = D-glyceraldehyde 3-phosphate + dihydroxyacetone phosphate. Its pathway is carbohydrate degradation; glycolysis; D-glyceraldehyde 3-phosphate and glycerone phosphate from D-glucose: step 4/4. In Lethenteron camtschaticum (Japanese lamprey), this protein is Fructose-bisphosphate aldolase, muscle type.